The sequence spans 49 residues: uncharacterized protein (49 aa).

The chain crosses the membrane as a helical span at residues 6-28 (IYPLTVFYFFAIEMSVFCYYNWF).

It localises to the membrane. This is an uncharacterized protein from Saccharomyces cerevisiae (strain ATCC 204508 / S288c) (Baker's yeast).